We begin with the raw amino-acid sequence, 143 residues long: Small ribosomal subunit protein bS6 (143 aa).

Residues 95–143 are disordered; sequence GPDTEQSFIMKSKDDKGDKPERRRRDDDENGDVGVSNDSDNDGGNAEAA. The segment covering 105–121 has biased composition (basic and acidic residues); it reads KSKDDKGDKPERRRRDD.

It belongs to the bacterial ribosomal protein bS6 family.

Its function is as follows. Binds together with bS18 to 16S ribosomal RNA. The chain is Small ribosomal subunit protein bS6 from Xylella fastidiosa (strain M23).